We begin with the raw amino-acid sequence, 279 residues long: NADPH-dependent 7-cyano-7-deazaguanine reductase (279 aa).

Substrate is bound at residue 86–88 (IES). Position 88-89 (88-89 (SK)) interacts with NADPH. The active-site Thioimide intermediate is the Cys-187. Asp-194 serves as the catalytic Proton donor. Residue 226-227 (HE) coordinates substrate. 255–256 (RG) contributes to the NADPH binding site.

It belongs to the GTP cyclohydrolase I family. QueF type 2 subfamily. Homodimer.

Its subcellular location is the cytoplasm. It catalyses the reaction 7-aminomethyl-7-carbaguanine + 2 NADP(+) = 7-cyano-7-deazaguanine + 2 NADPH + 3 H(+). It participates in tRNA modification; tRNA-queuosine biosynthesis. Functionally, catalyzes the NADPH-dependent reduction of 7-cyano-7-deazaguanine (preQ0) to 7-aminomethyl-7-deazaguanine (preQ1). The protein is NADPH-dependent 7-cyano-7-deazaguanine reductase of Haemophilus ducreyi (strain 35000HP / ATCC 700724).